The sequence spans 258 residues: tRNA (guanine-N(7)-)-methyltransferase (258 aa).

The interval 1–42 (MPETPLMRDNGPVNHADQDAPAVPEEGQTKDSKGSRLHPRVT) is disordered. S-adenosyl-L-methionine-binding residues include E90, E115, D142, and D165. Residue D165 is part of the active site. Substrate-binding positions include K169, D201, and 235–238 (TKFE).

Belongs to the class I-like SAM-binding methyltransferase superfamily. TrmB family.

The enzyme catalyses guanosine(46) in tRNA + S-adenosyl-L-methionine = N(7)-methylguanosine(46) in tRNA + S-adenosyl-L-homocysteine. The protein operates within tRNA modification; N(7)-methylguanine-tRNA biosynthesis. Functionally, catalyzes the formation of N(7)-methylguanine at position 46 (m7G46) in tRNA. The polypeptide is tRNA (guanine-N(7)-)-methyltransferase (Rhodococcus jostii (strain RHA1)).